Here is a 603-residue protein sequence, read N- to C-terminus: NADH-ubiquinone oxidoreductase chain 5 (603 aa).

Transmembrane regions (helical) follow at residues 4 to 24, 36 to 56, 87 to 107, 122 to 142, 171 to 191, 211 to 233, 241 to 261, 272 to 292, 301 to 320, 325 to 347, 370 to 390, 406 to 422, 488 to 508, and 583 to 603; these read YTSI…ATLV, VKTT…LYIF, MMFI…SLWY, LIFL…QLFI, AVLY…WFLL, LPLM…HPWL, TPVS…FLLI, LTQN…AMCA, IVAF…IGIN, AFLH…GSII, STSL…TGFY, AWAL…TSAY, LLAL…TLMT, and MIKL…LLMV.

The protein belongs to the complex I subunit 5 family. As to quaternary structure, core subunit of respiratory chain NADH dehydrogenase (Complex I) which is composed of 45 different subunits.

It is found in the mitochondrion inner membrane. It carries out the reaction a ubiquinone + NADH + 5 H(+)(in) = a ubiquinol + NAD(+) + 4 H(+)(out). Functionally, core subunit of the mitochondrial membrane respiratory chain NADH dehydrogenase (Complex I) which catalyzes electron transfer from NADH through the respiratory chain, using ubiquinone as an electron acceptor. Essential for the catalytic activity and assembly of complex I. The polypeptide is NADH-ubiquinone oxidoreductase chain 5 (MT-ND5) (Papio hamadryas (Hamadryas baboon)).